Consider the following 216-residue polypeptide: Ceramide-1-phosphate transfer protein (216 aa).

Positions 56, 60, 108, 112, and 152 each coordinate an N-acylsphingoid base 1-phosphate.

Belongs to the GLTP family.

It localises to the cytoplasm. It is found in the cytosol. Its subcellular location is the golgi apparatus. The protein resides in the trans-Golgi network membrane. The protein localises to the cell membrane. It localises to the endosome membrane. It is found in the nucleus outer membrane. The enzyme catalyses N-(hexadecanoyl)-sphing-4-enine-1-phosphate(in) = N-(hexadecanoyl)-sphing-4-enine-1-phosphate(out). It catalyses the reaction N-(9Z-octadecenoyl)-sphing-4-enine-1-phosphate(in) = N-(9Z-octadecenoyl)-sphing-4-enine-1-phosphate(out). Mediates the intracellular transfer of ceramide-1-phosphate (C1P) between organelle membranes and the cell membrane. Required for normal structure of the Golgi stacks. Can bind phosphoceramides with a variety of aliphatic chains, but has a preference for lipids with saturated C16:0 or monounsaturated C18:1 aliphatic chains, and is inefficient with phosphoceramides containing lignoceryl (C24:0). Plays a role in the regulation of the cellular levels of ceramide-1-phosphate, and thereby contributes to the regulation of phospholipase PLA2G4A activity and the release of arachidonic acid. Has no activity with galactosylceramide, lactosylceramide, sphingomyelin, phosphatidylcholine, phosphatidic acid and ceramide. C1P transfer is stimulated by phosphatidylserine in C1P source vesicles. Regulates autophagy, inflammasome mediated IL1B and IL18 processing, and pyroptosis, but not apoptosis. The chain is Ceramide-1-phosphate transfer protein (Cptp) from Rattus norvegicus (Rat).